Consider the following 361-residue polypeptide: Phosphoserine aminotransferase (361 aa).

An L-glutamate-binding site is contributed by Arg42. Pyridoxal 5'-phosphate-binding positions include Ala76–Arg77, Trp102, Thr153, Asp173, and Gln196. An N6-(pyridoxal phosphate)lysine modification is found at Lys197. Asn238–Thr239 lines the pyridoxal 5'-phosphate pocket.

This sequence belongs to the class-V pyridoxal-phosphate-dependent aminotransferase family. SerC subfamily. As to quaternary structure, homodimer. The cofactor is pyridoxal 5'-phosphate.

It localises to the cytoplasm. The enzyme catalyses O-phospho-L-serine + 2-oxoglutarate = 3-phosphooxypyruvate + L-glutamate. It carries out the reaction 4-(phosphooxy)-L-threonine + 2-oxoglutarate = (R)-3-hydroxy-2-oxo-4-phosphooxybutanoate + L-glutamate. It functions in the pathway amino-acid biosynthesis; L-serine biosynthesis; L-serine from 3-phospho-D-glycerate: step 2/3. Its pathway is cofactor biosynthesis; pyridoxine 5'-phosphate biosynthesis; pyridoxine 5'-phosphate from D-erythrose 4-phosphate: step 3/5. Catalyzes the reversible conversion of 3-phosphohydroxypyruvate to phosphoserine and of 3-hydroxy-2-oxo-4-phosphonooxybutanoate to phosphohydroxythreonine. The chain is Phosphoserine aminotransferase from Yersinia pestis (strain Pestoides F).